Here is a 430-residue protein sequence, read N- to C-terminus: Aspartate aminotransferase, mitochondrial (430 aa).

Residues 1 to 29 (MALLHSGRVLSGIAAAFHPGLAAAASARA) constitute a mitochondrion transit peptide. Residue threonine 48 is modified to Phosphothreonine. Position 59 is an N6-acetyllysine (lysine 59). Glycine 65 is a binding site for substrate. Lysine 73 is modified (N6-acetyllysine; alternate). N6-succinyllysine; alternate is present on lysine 73. Position 82 is an N6-acetyllysine (lysine 82). Residue lysine 90 is modified to N6-acetyllysine; alternate. An N6-succinyllysine; alternate modification is found at lysine 90. At tyrosine 96 the chain carries 3'-nitrotyrosine; alternate. Residue tyrosine 96 is modified to Phosphotyrosine; alternate. N6-acetyllysine; alternate is present on residues lysine 107 and lysine 122. Residues lysine 107 and lysine 122 each carry the N6-succinyllysine; alternate modification. Serine 143 is subject to Phosphoserine. Residue lysine 159 is modified to N6-acetyllysine; alternate. Lysine 159 is subject to N6-succinyllysine; alternate. Tryptophan 162 lines the substrate pocket. Lysine 185 is subject to N6-acetyllysine; alternate. Position 185 is an N6-succinyllysine; alternate (lysine 185). Residue asparagine 215 coordinates substrate. Lysine 227 is modified (N6-succinyllysine). Lysine 234 is subject to N6-acetyllysine. 2 positions are modified to N6-acetyllysine; alternate: lysine 279 and lysine 296. Lysine 279 is subject to N6-(pyridoxal phosphate)lysine; alternate. Lysine 296 carries the N6-succinyllysine; alternate modification. Residue lysine 302 is modified to N6-acetyllysine. Lysine 309 is subject to N6-acetyllysine; alternate. At lysine 309 the chain carries N6-succinyllysine; alternate. At arginine 313 the chain carries Asymmetric dimethylarginine. A Phosphothreonine modification is found at threonine 333. Lysine 338 is modified (N6-acetyllysine; alternate). Lysine 338 is modified (N6-succinyllysine; alternate). Lysine 345 is subject to N6-acetyllysine. Lysine 363 is modified (N6-acetyllysine; alternate). The residue at position 363 (lysine 363) is an N6-succinyllysine; alternate. Residues lysine 364 and lysine 387 each carry the N6-acetyllysine modification. An N6-acetyllysine; alternate mark is found at lysine 396 and lysine 404. An N6-succinyllysine; alternate mark is found at lysine 396 and lysine 404. Arginine 407 lines the substrate pocket.

The protein belongs to the class-I pyridoxal-phosphate-dependent aminotransferase family. Homodimer. Requires pyridoxal 5'-phosphate as cofactor.

The protein resides in the mitochondrion matrix. It localises to the cell membrane. The catalysed reaction is L-aspartate + 2-oxoglutarate = oxaloacetate + L-glutamate. It catalyses the reaction L-kynurenine + 2-oxoglutarate = kynurenate + L-glutamate + H2O. In terms of biological role, catalyzes the irreversible transamination of the L-tryptophan metabolite L-kynurenine to form kynurenic acid (KA). As a member of the malate-aspartate shuttle, it has a key role in the intracellular NAD(H) redox balance. Is important for metabolite exchange between mitochondria and cytosol, and for amino acid metabolism. Facilitates cellular uptake of long-chain free fatty acids. The chain is Aspartate aminotransferase, mitochondrial (GOT2) from Macaca fascicularis (Crab-eating macaque).